Here is a 102-residue protein sequence, read N- to C-terminus: NADH-quinone oxidoreductase subunit K 1 (102 aa).

Helical transmembrane passes span 3-23 (TLTTYLVIAAVLFCLGLLGIL), 29-49 (VGMLISLELMLNGANLNFMAF), and 62-82 (IIALIVMGLAAAEAAIGLSII).

It belongs to the complex I subunit 4L family. As to quaternary structure, NDH-1 is composed of 14 different subunits. Subunits NuoA, H, J, K, L, M, N constitute the membrane sector of the complex.

Its subcellular location is the cell inner membrane. The catalysed reaction is a quinone + NADH + 5 H(+)(in) = a quinol + NAD(+) + 4 H(+)(out). In terms of biological role, NDH-1 shuttles electrons from NADH, via FMN and iron-sulfur (Fe-S) centers, to quinones in the respiratory chain. The immediate electron acceptor for the enzyme in this species is believed to be ubiquinone. Couples the redox reaction to proton translocation (for every two electrons transferred, four hydrogen ions are translocated across the cytoplasmic membrane), and thus conserves the redox energy in a proton gradient. The chain is NADH-quinone oxidoreductase subunit K 1 from Syntrophobacter fumaroxidans (strain DSM 10017 / MPOB).